The sequence spans 430 residues: Tol-Pal system protein TolB (430 aa).

The signal sequence occupies residues 1–21 (MKQALRVAFGFLILWASVLHA).

The protein belongs to the TolB family. The Tol-Pal system is composed of five core proteins: the inner membrane proteins TolA, TolQ and TolR, the periplasmic protein TolB and the outer membrane protein Pal. They form a network linking the inner and outer membranes and the peptidoglycan layer.

The protein resides in the periplasm. Part of the Tol-Pal system, which plays a role in outer membrane invagination during cell division and is important for maintaining outer membrane integrity. TolB occupies a key intermediary position in the Tol-Pal system because it communicates directly with both membrane-embedded components, Pal in the outer membrane and TolA in the inner membrane. The polypeptide is Tol-Pal system protein TolB (Shigella flexneri).